Reading from the N-terminus, the 335-residue chain is Glyceraldehyde-3-phosphate dehydrogenase, cytosolic (335 aa).

Residues 13–14 (RI), Asp-35, and Arg-80 each bind NAD(+). Residues 151 to 153 (SCT), Thr-182, 211 to 212 (TG), and Arg-234 contribute to the D-glyceraldehyde 3-phosphate site. Residue Cys-152 is the Nucleophile of the active site. Asn-316 contributes to the NAD(+) binding site.

It belongs to the glyceraldehyde-3-phosphate dehydrogenase family. In terms of assembly, homotetramer.

It is found in the cytoplasm. It catalyses the reaction D-glyceraldehyde 3-phosphate + phosphate + NAD(+) = (2R)-3-phospho-glyceroyl phosphate + NADH + H(+). It participates in carbohydrate degradation; glycolysis; pyruvate from D-glyceraldehyde 3-phosphate: step 1/5. This is Glyceraldehyde-3-phosphate dehydrogenase, cytosolic (GAPC) from Chondrus crispus (Carrageen Irish moss).